The primary structure comprises 206 residues: Guanylate kinase (206 aa).

Residues Phe-5–Lys-183 form the Guanylate kinase-like domain. Gly-12–Ser-19 contributes to the ATP binding site.

This sequence belongs to the guanylate kinase family.

It is found in the cytoplasm. The enzyme catalyses GMP + ATP = GDP + ADP. Its function is as follows. Essential for recycling GMP and indirectly, cGMP. This chain is Guanylate kinase (gmk), found in Helicobacter pylori (strain J99 / ATCC 700824) (Campylobacter pylori J99).